Consider the following 1134-residue polypeptide: MMS19 nucleotide excision repair protein homolog (1134 aa).

HEAT repeat units lie at residues 959–998, 1002–1047, 1050–1089, and 1092–1130; these read QRCF…NVPV, LDNT…KGQQ, SDNA…LPHR, and YPFR…ITSG.

The protein belongs to the MET18/MMS19 family. Part of a complex composed of AE7, CIA1, MMS19 and NAR1. Interacts with AE7.

It is found in the nucleus. The protein localises to the cytoplasm. Functionally, may select specific target apoproteins to which a Fe-S cluster produced by the cytosolic iron-sulfur (Fe-S) protein assembly (CIA) pathway is transferred. This is MMS19 nucleotide excision repair protein homolog from Arabidopsis thaliana (Mouse-ear cress).